The chain runs to 264 residues: Probable amino-acid-binding protein YxeM (264 aa).

Residues Met-1–Ala-20 form the signal peptide. Cys-21 is lipidated: N-palmitoyl cysteine. Cys-21 carries S-diacylglycerol cysteine lipidation.

Belongs to the bacterial solute-binding protein 3 family. As to quaternary structure, the complex is composed of two ATP-binding proteins (YxeO), two transmembrane proteins (YxeN) and a solute-binding protein (YxeM).

It is found in the cell membrane. The protein resides in the membrane raft. Functionally, probably part of the ABC transporter complex YxeMNO that could be involved in amino-acid import. May transport S-methylcysteine. This chain is Probable amino-acid-binding protein YxeM (yxeM), found in Bacillus subtilis (strain 168).